Consider the following 436-residue polypeptide: GTPase Der (436 aa).

2 consecutive EngA-type G domains span residues 4–167 (PIVA…NKES) and 176–351 (IRLS…ENHK). GTP-binding positions include 10-17 (GKPNVGKS), 57-61 (DTGGI), 119-122 (NKVD), 182-189 (GRPNVGKS), 229-233 (DTAGM), and 294-297 (NKWD). In terms of domain architecture, KH-like spans 352–436 (KRVQSSTLNE…PIHIIPRKRN (85 aa)).

It belongs to the TRAFAC class TrmE-Era-EngA-EngB-Septin-like GTPase superfamily. EngA (Der) GTPase family. In terms of assembly, associates with the 50S ribosomal subunit.

Functionally, GTPase that plays an essential role in the late steps of ribosome biogenesis. In Staphylococcus epidermidis (strain ATCC 35984 / DSM 28319 / BCRC 17069 / CCUG 31568 / BM 3577 / RP62A), this protein is GTPase Der.